We begin with the raw amino-acid sequence, 616 residues long: Homeodomain-interacting protein kinase 4 (616 aa).

In terms of domain architecture, Protein kinase spans 11-347 (YDIIEVLGKG…PSAALRHPFV (337 aa)). ATP contacts are provided by residues 17–25 (LGKGTFGEV) and Lys-40. Asp-136 functions as the Proton acceptor in the catalytic mechanism. Residues 485–616 (RHKARKPPAG…SFLQHVTGHH (132 aa)) are disordered. The segment covering 496–511 (KSDSNLSNLIRLSQVS) has biased composition (polar residues). The residue at position 511 (Ser-511) is a Phosphoserine.

This sequence belongs to the protein kinase superfamily. CMGC Ser/Thr protein kinase family. HIPK subfamily. Post-translationally, autophosphorylated.

The protein resides in the cytoplasm. It carries out the reaction L-seryl-[protein] + ATP = O-phospho-L-seryl-[protein] + ADP + H(+). The enzyme catalyses L-threonyl-[protein] + ATP = O-phospho-L-threonyl-[protein] + ADP + H(+). Its function is as follows. Protein kinase that phosphorylates TP53, and thus induces TP53 repression of BIRC5 promoter. May act as a corepressor of transcription factors (Potential). This is Homeodomain-interacting protein kinase 4 (HIPK4) from Macaca fascicularis (Crab-eating macaque).